The chain runs to 145 residues: Large ribosomal subunit protein uL15 (145 aa).

A compositionally biased stretch (basic and acidic residues) spans 1–18 (MKLHELKYTEGSKKDVTR). The segment at 1 to 51 (MKLHELKYTEGSKKDVTRVGRGMASGKGKTSTRGHKGQNSRSGGGVRVGFE) is disordered. The segment covering 42 to 51 (SGGGVRVGFE) has biased composition (gly residues).

The protein belongs to the universal ribosomal protein uL15 family. Part of the 50S ribosomal subunit.

Binds to the 23S rRNA. The polypeptide is Large ribosomal subunit protein uL15 (Mesoplasma florum (strain ATCC 33453 / NBRC 100688 / NCTC 11704 / L1) (Acholeplasma florum)).